A 569-amino-acid polypeptide reads, in one-letter code: MLCEIECRALNAAHTMLIQDFEPRDALTYLEGEKIFTEDHSDLISNMPTRLERIANFLRAYRRQASELAPLIDFFEYNNQNHLKDFLDEYLWFATHQPDKLRPVVLVPKFSRQMLDRKLLLGNVPKQMNCFSREFHVDRVIEKLDEMCDLESFFLFLHGRSGSGKSVIASQALSKSDQLIGINYDSVVWLKDSGTTPKATFDLFTDLLLMLKRARVVSDTDDSHNMPDFINRVLSRSEDDLLNFPSVEHVTSVVLKRMIANALIDRPNTLFVLDDVVQEDTIRWAQELRLRCLITTRDVEISNAASPECEFIEVTPLESYECFELLESYGMPVPAIERDEDILHKTIDLTSGNPAALMMIFKSCEPKTFEKMAQLNSKLETRGLSAIECITPYCYKSLSSSLQRCVEVLSDEDRSALAFAVIMPPGIDIPVKIWSCVIPVDICSNEEDQLDDEVADRLKRLSKRGALLSGKRSPVLTYKIDHVIHLFLKHVVDVQTIANGISILEQRLHELGNNNTPTPERHMPSKFRRTSAGDMFPKVEDSVIRPEDYSKFMQIHRTFYDSLKKFTSQ.

One can recognise a CARD domain in the interval 1–91 (MLCEIECRAL…HLKDFLDEYL (91 aa)). The region spanning 116 to 442 (DRKLLLGNVP…IWSCVIPVDI (327 aa)) is the NB-ARC domain. ATP is bound by residues Phe-131, 162-167 (GSGKSV), and Gln-171. Ser-166 serves as a coordination point for Mg(2+).

As to quaternary structure, associates as an asymmetric homodimer with ced-9. Upon release from ced-9, forms an octamer, known as the apoptosome, and interacts with ced-3; the interaction results in ced-3 autoproteolytic cleavage and activation. The octamer (a tetramer of an asymmetric dimer) also interacts with two processed ced-3 to form a stable holoenzyme. Interacts with sex-determining protein fem-1. May form a complex composed of ced-3, ced-4 and mac-1 or of ced-9, ced-4 and mac-1. Within the complex, interacts with ced-4.

The protein resides in the mitochondrion. It localises to the cytoplasm. Its subcellular location is the perinuclear region. Plays a major role in programmed cell death (PCD, apoptosis). egl-1 binds to and directly inhibits the activity of ced-9, releasing the cell death activator ced-4 from a ced-9/ced-4 containing protein complex and allowing ced-4 to induce caspase ced-3 autoproteolytic cleavage and activation. Also forms a holoenzyme with processed ced-3 enhancing ced-3 activity. Component of the egl-1, ced-9, ced-4 and ced-3 apoptotic signaling cascade required for the initiation of programmed cell death in cells fated to die during embryonic and postembryonic development. During oogenesis, required for germline apoptosis downstream of ced-9 and upstream of ced-3 but independently of egl-1. May regulate germline apoptosis in response to DNA damage, probably downstream of let-60/ras and mpk-1 pathway. Regulates CEP neuron apoptosis in response to high Al(3+) levels. During male tail morphogenesis, promotes apoptosis of the tail-spike cell. During larval development, required for the elimination of transient presynaptic components downstream of egl-1 and ced-9 and upstream of ced-3 apoptotic pathway. Together with ain-1, a component of the miRNA-induced-silencing complex (miRISC), and probably upstream of ced-3, regulates temporal cell fate patterning during larval development. May play a role in resistance to S.typhimurium-mediated infection. The polypeptide is Cell death protein 4 (Caenorhabditis briggsae).